The primary structure comprises 434 residues: Monodehydroascorbate reductase 1, peroxisomal (434 aa).

Residues 13–16 (GGVS), Glu-40, Arg-47, Lys-52, Ile-95, and 146–147 (RE) each bind FAD. NAD(+) contacts are provided by residues 171 to 177 (GGYIGLE), Glu-195, Arg-201, and Gly-260. Residue 173-177 (YIGLE) participates in NADP(+) binding. Residues Arg-201 and Gly-260 each contribute to the NADP(+) site. Asp-297 is an FAD binding site. Residue 313–314 (EH) coordinates NAD(+). 313–314 (EH) lines the NADP(+) pocket. Val-315 is an FAD binding site. Residue Arg-319 participates in L-ascorbate binding. Position 348 (Tyr-348) interacts with FAD. Tyr-348 serves as a coordination point for NAD(+). Tyr-348 provides a ligand contact to NADP(+). Arg-350 serves as a coordination point for L-ascorbate. Position 416 is a phosphoserine (Ser-416).

It belongs to the FAD-dependent oxidoreductase family. FAD serves as cofactor.

The protein resides in the peroxisome matrix. The enzyme catalyses 2 monodehydro-L-ascorbate radical + NADH + H(+) = 2 L-ascorbate + NAD(+). Functionally, catalyzes the conversion of monodehydroascorbate to ascorbate, oxidizing NADH in the process. The sequence is that of Monodehydroascorbate reductase 1, peroxisomal from Arabidopsis thaliana (Mouse-ear cress).